Consider the following 4625-residue polypeptide: Dynein-1-alpha heavy chain, flagellar inner arm I1 complex (4625 aa).

Positions Met1–Lys1919 are stem. A compositionally biased stretch (acidic residues) spans Glu70 to Asp84. Residues Glu70–Lys163 form a disordered region. Residues Glu111–Ala140 show a composition bias toward low complexity. The segment covering Gly144–Glu155 has biased composition (acidic residues). Ala960 to Ser967 is an ATP binding site. Coiled-coil stretches lie at residues Glu1227–Thr1259 and Thr1339–Gln1409. AAA regions lie at residues Tyr1920–Met2141, Asp2201–Lys2437, Glu2550–Gly2800, and Asn2906–Tyr3155. ATP-binding positions include Gly1958–Thr1965, Gly2242–Thr2249, Gly2588–Ser2595, and Gly2945–Gln2952. Coiled-coil stretches lie at residues Leu3192 to Tyr3297 and Lys3400 to Asp3494. The interval Leu3192–Asp3494 is stalk. AAA stretches follow at residues Leu3542 to Glu3773 and Ile3998 to Thr4216. Gly3680–Thr3687 lines the ATP pocket. A coiled-coil region spans residues Glu3701–Thr3788.

This sequence belongs to the dynein heavy chain family. The I1 inner arm complex (also known as the f dynein complex) is a two-headed isoform composed of two heavy chains (1-alpha and 1-beta), three intermediate chains and three light chains. I1 occupies a specific position proximal to the first radial spoke and repeats every 96 nm along the length of the axoneme.

It localises to the cell projection. The protein localises to the cilium. It is found in the flagellum. Its subcellular location is the cytoplasm. The protein resides in the cytoskeleton. It localises to the flagellum axoneme. Force generating protein of eukaryotic cilia and flagella. Produces force towards the minus ends of microtubules. Dynein has ATPase activity; the force-producing power stroke is thought to occur on release of ADP. Required for assembly of the I1 inner arm complex and its targeting to the appropriate axoneme location. Also required for phototaxis. The sequence is that of Dynein-1-alpha heavy chain, flagellar inner arm I1 complex (DHC1) from Chlamydomonas reinhardtii (Chlamydomonas smithii).